The primary structure comprises 721 residues: ATP-dependent zinc metalloprotease FtsH (721 aa).

Residues 1-44 are Cytoplasmic-facing; that stretch reads MYFLKKIVNLFSSKIESEDNNVKKDDLTQPRKQSPEARKRRNRR. A helical transmembrane segment spans residues 45–65; the sequence is IIFWLIILLIIGTIIGVIIYF. The Extracellular portion of the chain corresponds to 66-190; the sequence is SVRKEYDNVI…AGIPSSGFNP (125 aa). The chain crosses the membrane as a helical span at residues 191 to 211; that stretch reads QVIISPLISIIFFIIFLYIIL. The Cytoplasmic portion of the chain corresponds to 212-721; it reads RVSKAQSDSL…KDKEKDQKSN (510 aa). 279 to 286 is an ATP binding site; sequence GPPGTGKT. Histidine 498 is a Zn(2+) binding site. Glutamate 499 is a catalytic residue. Zn(2+)-binding residues include histidine 502 and aspartate 577. The disordered stretch occupies residues 686-721; that stretch reads NKREASQKQANSSVEEAKVVDDEESIKDKEKDQKSN. Over residues 700–721 the composition is skewed to basic and acidic residues; it reads EEAKVVDDEESIKDKEKDQKSN.

The protein in the central section; belongs to the AAA ATPase family. In the C-terminal section; belongs to the peptidase M41 family. In terms of assembly, homohexamer. The cofactor is Zn(2+).

It is found in the cell membrane. In terms of biological role, acts as a processive, ATP-dependent zinc metallopeptidase for both cytoplasmic and membrane proteins. Plays a role in the quality control of integral membrane proteins. The protein is ATP-dependent zinc metalloprotease FtsH of Ureaplasma parvum serovar 3 (strain ATCC 27815 / 27 / NCTC 11736).